A 125-amino-acid polypeptide reads, in one-letter code: Translation initiation factor 5A (125 aa).

Hypusine is present on Lys-35.

Belongs to the eIF-5A family.

It localises to the cytoplasm. Its function is as follows. Functions by promoting the formation of the first peptide bond. This Methanoculleus marisnigri (strain ATCC 35101 / DSM 1498 / JR1) protein is Translation initiation factor 5A (eIF5A).